The primary structure comprises 165 residues: Regulator of ribonuclease activity A (165 aa).

It belongs to the RraA family. In terms of assembly, homotrimer. Binds to both RNA-binding sites in the C-terminal region of Rne and to RhlB.

It localises to the cytoplasm. Its function is as follows. Globally modulates RNA abundance by binding to RNase E (Rne) and regulating its endonucleolytic activity. Can modulate Rne action in a substrate-dependent manner by altering the composition of the degradosome. Modulates RNA-binding and helicase activities of the degradosome. The polypeptide is Regulator of ribonuclease activity A (Haemophilus ducreyi (strain 35000HP / ATCC 700724)).